The following is a 380-amino-acid chain: Protein Wnt-5a (380 aa).

The first 37 residues, 1 to 37 (MKKPIGILSPGVALGTAGGAMSSKFFLMALATFFSFA), serve as a signal peptide directing secretion. Residues 38 to 61 (QVVIEANSWWSLGMNNPVQMSEVH) constitute a propeptide that is removed on maturation. Residues Cys-104 and Cys-115 are joined by a disulfide bond. Residues Asn-114 and Asn-120 are each glycosylated (N-linked (GlcNAc...) asparagine). Disulfide bonds link Cys-154–Cys-162, Cys-164–Cys-182, Cys-238–Cys-252, Cys-240–Cys-247, Cys-309–Cys-340, Cys-325–Cys-335, Cys-339–Cys-379, Cys-355–Cys-370, Cys-357–Cys-367, and Cys-362–Cys-363. The O-palmitoleoyl serine; by PORCN moiety is linked to residue Ser-244. N-linked (GlcNAc...) asparagine glycans are attached at residues Asn-312 and Asn-326.

It belongs to the Wnt family. Forms a soluble 1:1 complex with AFM; this prevents oligomerization and is required for prolonged biological activity. The complex with AFM may represent the physiological form in body fluids. Homooligomer; disulfide-linked, leading to inactivation (in vitro). Interacts with PORCN. Interacts with WLS. Interacts with glypican GCP3. Interacts with PKD1 (via extracellular domain). Interacts with TMEM67. In terms of processing, glycosylation is necessary for secretion but not for activity. Palmitoleoylation is required for efficient binding to frizzled receptors. Depalmitoleoylation leads to Wnt signaling pathway inhibition. Post-translationally, proteolytic processing by TIKI1 and TIKI2 promotes oxidation and formation of large disulfide-bond oligomers, leading to inactivation of WNT5A.

It is found in the secreted. It localises to the extracellular space. The protein resides in the extracellular matrix. Functionally, ligand for members of the frizzled family of seven transmembrane receptors. Can activate or inhibit canonical Wnt signaling, depending on receptor context. In the presence of FZD4, activates beta-catenin signaling. In the presence of ROR2, inhibits the canonical Wnt pathway by promoting beta-catenin degradation through a GSK3-independent pathway which involves down-regulation of beta-catenin-induced reporter gene expression. Suppression of the canonical pathway allows chondrogenesis to occur and inhibits tumor formation. Stimulates cell migration. Decreases proliferation, migration, invasiveness and clonogenicity of carcinoma cells and may act as a tumor suppressor. Mediates motility of melanoma cells. Required during embryogenesis for extension of the primary anterior-posterior axis and for outgrowth of limbs and the genital tubercle. Inhibits type II collagen expression in chondrocytes. The chain is Protein Wnt-5a (Wnt5a) from Rattus norvegicus (Rat).